A 312-amino-acid polypeptide reads, in one-letter code: Uracil-DNA glycosylase (312 aa).

Basic and acidic residues predominate over residues 1-11 (MSSACDHETEA). Residues 1–61 (MSSACDHETE…PPKRRRPCGL (61 aa)) are disordered. A compositionally biased stretch (polar residues) spans 22 to 33 (EENGSNSSTPTS). The active-site Proton acceptor is the aspartate 155.

The protein belongs to the uracil-DNA glycosylase (UDG) superfamily. UNG family.

The protein resides in the host nucleus. The catalysed reaction is Hydrolyzes single-stranded DNA or mismatched double-stranded DNA and polynucleotides, releasing free uracil.. Functionally, excises uracil residues from the DNA which can arise as a result of misincorporation of dUMP residues by DNA polymerase or deamination of cytosines. Therefore may reduce deleterious uracil incorporation into the viral genome, particularly in terminally differentiated cells which lack DNA repair enzymes. In Equine herpesvirus 1 (strain V592) (EHV-1), this protein is Uracil-DNA glycosylase (61).